The chain runs to 783 residues: Ras and Rab interactor 1 (783 aa).

Position 1 is an N-acetylmethionine (M1). The disordered stretch occupies residues 1 to 53 (MESPGESGAGSPGAPSPSSFTTGHLAREKPAQDPLYDVPNASGGQAGGPQRPG). S3 and S16 each carry phosphoserine. Y36 is modified (phosphotyrosine; by ABL1 and ABL2). One can recognise an SH2 domain in the interval 69 to 163 (WLQLQANAAA…ILLLPLQLPR (95 aa)). Phosphoserine is present on residues S210, S258, S333, and S337. 2 disordered regions span residues 250 to 282 (STET…ERLP) and 295 to 342 (YRVP…HLGR). A compositionally biased stretch (pro residues) spans 257–269 (LSPPAVPPPPVPV). Residues 294-727 (GYRVPAGSGP…GSGQSEARSR (434 aa)) form a ras and 14-3-3 protein binding region region. Low complexity predominate over residues 317–334 (GSPSSSEEEGVPGSRGSP). A Phosphoserine; by PKD/PRKD1 modification is found at S351. Residues 456–598 (LAADGSLGRL…LSGLGQAHTL (143 aa)) enclose the VPS9 domain. Residues S609 and S611 each carry the phosphoserine modification. A Ras-associating domain is found at 624–706 (FQHLLRVAYQ…GYLVYRRAEW (83 aa)). R692 is modified (omega-N-methylarginine). The segment at 709 to 783 (TQGAVTEEEG…EAEGSRAAEE (75 aa)) is disordered. Residues 762 to 772 (QAQEGPAQPGE) show a composition bias toward low complexity.

It belongs to the RIN (Ras interaction/interference) family. As to quaternary structure, interacts with the GTP-bound form of Ras proteins (NRAS, HRAS and KRAS). This interaction prevents the association between RAF1 and Ras. Interacts with 14-3-3 proteins YWHAB, YWHAE and YWHAZ when phosphorylated on Ser-351. Interacts with the SH3 domain of ABL1 and ABL2. Interacts with RAB5A. The interaction with Ras is probably regulated and antagonized by the interaction with 14-3-3 proteins. The interaction with 14-3-3 proteins is regulated by phosphorylation on Ser-351. Phosphorylated on tyrosine residues by ABL1 and ABL2. Phosphorylation at Ser-351 by PRKD1 induces interaction with 14-3-3 proteins. As to expression, expressed in all tissues examined with high levels in brain, placenta and pancreas.

Its subcellular location is the cytoplasm. It is found in the membrane. The protein localises to the cytoskeleton. Ras effector protein, which may serve as an inhibitory modulator of neuronal plasticity in aversive memory formation. Can affect Ras signaling at different levels. First, by competing with RAF1 protein for binding to activated Ras. Second, by enhancing signaling from ABL1 and ABL2, which regulate cytoskeletal remodeling. Third, by activating RAB5A, possibly by functioning as a guanine nucleotide exchange factor (GEF) for RAB5A, by exchanging bound GDP for free GTP, and facilitating Ras-activated receptor endocytosis. This chain is Ras and Rab interactor 1 (RIN1), found in Homo sapiens (Human).